A 465-amino-acid polypeptide reads, in one-letter code: Na(+)-translocating NADH-quinone reductase subunit A (465 aa).

It belongs to the NqrA family. As to quaternary structure, composed of six subunits; NqrA, NqrB, NqrC, NqrD, NqrE and NqrF.

The enzyme catalyses a ubiquinone + n Na(+)(in) + NADH + H(+) = a ubiquinol + n Na(+)(out) + NAD(+). In terms of biological role, NQR complex catalyzes the reduction of ubiquinone-1 to ubiquinol by two successive reactions, coupled with the transport of Na(+) ions from the cytoplasm to the periplasm. NqrA to NqrE are probably involved in the second step, the conversion of ubisemiquinone to ubiquinol. The protein is Na(+)-translocating NADH-quinone reductase subunit A of Chlamydia trachomatis serovar A (strain ATCC VR-571B / DSM 19440 / HAR-13).